The primary structure comprises 456 residues: uncharacterized protein (456 aa).

In terms of domain architecture, TRAM spans 2–60 (AMRKGKEYELNIEEIEFPSMGIAYHEGLKVYVKHGIPGQKVLARITTKKKDHAKGKIIE). [4Fe-4S] cluster-binding residues include C73, C79, C82, and C162. Positions 288, 317, 338, and 383 each coordinate S-adenosyl-L-methionine. C410 serves as the catalytic Nucleophile.

It belongs to the class I-like SAM-binding methyltransferase superfamily. RNA M5U methyltransferase family.

This is an uncharacterized protein from Clostridium tetani (strain Massachusetts / E88).